Consider the following 137-residue polypeptide: Basic phospholipase A2 homolog 4a (137 aa).

An N-terminal signal peptide occupies residues 1–16; that stretch reads MRTLWIVTVLLVGVEG. Intrachain disulfides connect cysteine 42–cysteine 131, cysteine 44–cysteine 60, cysteine 59–cysteine 111, cysteine 65–cysteine 137, cysteine 66–cysteine 104, cysteine 73–cysteine 97, and cysteine 91–cysteine 102. The important for membrane-damaging activities in eukaryotes and bacteria; heparin-binding stretch occupies residues 121-133; sequence KKYKIYPKFFCKK.

The protein belongs to the phospholipase A2 family. Group II subfamily. K49 sub-subfamily. Homodimer; non-covalently linked. Expressed by the venom gland.

The protein localises to the secreted. Its function is as follows. Snake venom phospholipase A2 homolog that lacks enzymatic activity. Is myotoxic and displays edema-inducing activities. A model of myotoxic mechanism has been proposed: an apo Lys49-PLA2 is activated by the entrance of a hydrophobic molecule (e.g. fatty acid) at the hydrophobic channel of the protein leading to a reorientation of a monomer. This reorientation causes a transition between 'inactive' to 'active' states, causing alignment of C-terminal and membrane-docking sites (MDoS) side-by-side and putting the membrane-disruption sites (MDiS) in the same plane, exposed to solvent and in a symmetric position for both monomers. The MDoS region stabilizes the toxin on membrane by the interaction of charged residues with phospholipid head groups. Subsequently, the MDiS region destabilizes the membrane with penetration of hydrophobic residues. This insertion causes a disorganization of the membrane, allowing an uncontrolled influx of ions (i.e. calcium and sodium), and eventually triggering irreversible intracellular alterations and cell death. This chain is Basic phospholipase A2 homolog 4a, found in Bothrops asper (Terciopelo).